Consider the following 388-residue polypeptide: Mannitol-1-phosphate 5-dehydrogenase (388 aa).

Residue 5-16 coordinates NAD(+); the sequence is AIQFGGGNIGRG. Lys213 is an active-site residue.

Belongs to the mannitol dehydrogenase family. As to quaternary structure, monomer.

It catalyses the reaction D-mannitol 1-phosphate + NAD(+) = beta-D-fructose 6-phosphate + NADH + H(+). In terms of biological role, catalyzes the NAD(H)-dependent interconversion of D-fructose 6-phosphate and D-mannitol 1-phosphate in the mannitol metabolic pathway. Has a strong preference for NADH over NADPH. Required for protection of conidiospores against exogenous stresses such as high temperatures and an oxidative environment. This chain is Mannitol-1-phosphate 5-dehydrogenase (mpdA), found in Aspergillus niger.